The primary structure comprises 387 residues: MLQRIYLDNNATTRIDPKVKEIMDPFLRDHYGNPSSLHQFGTETHPAIAEALDKLYKGINARDIDDVIITSCATESNNWVLKGVYFDECLKKGKNHIVTTVAEHPAVRSTCNFLESLGVEVTYLPINEHGSITAEQVKEAITEKTALVSVMWANNETGLIFPIEEIGAICKEKGVLFHTDAVQAIGKIPVDVLKANADFLSFSAHKFHGPKGIGGLYIRSGVGLTPLFHGGEHMNGRRSGTLNVPYIVGMGEAMKLAVEHLDYEKEVVGKLRDKLEEALLKIPDVMVVGDRIHRVPNTTLVSVRGIEGEAMLWDLNRSNIAASTGSACASEDLEANPVMVAIGASKELAHTAIRLSLSRFNTEAEIDKTIEVFSQAAVRLRNISSSY.

Residues 73 to 74 (AT), asparagine 155, glutamine 183, and 203 to 205 (SAH) each bind pyridoxal 5'-phosphate. Lysine 206 is modified (N6-(pyridoxal phosphate)lysine). Pyridoxal 5'-phosphate is bound at residue threonine 241. Cysteine 328 functions as the Cysteine persulfide intermediate in the catalytic mechanism. A [2Fe-2S] cluster-binding site is contributed by cysteine 328.

This sequence belongs to the class-V pyridoxal-phosphate-dependent aminotransferase family. NifS/IscS subfamily. As to quaternary structure, homodimer. Forms a heterotetramer with IscU, interacts with other sulfur acceptors. It depends on pyridoxal 5'-phosphate as a cofactor.

Its subcellular location is the cytoplasm. The catalysed reaction is (sulfur carrier)-H + L-cysteine = (sulfur carrier)-SH + L-alanine. It functions in the pathway cofactor biosynthesis; iron-sulfur cluster biosynthesis. Master enzyme that delivers sulfur to a number of partners involved in Fe-S cluster assembly, tRNA modification or cofactor biosynthesis. Catalyzes the removal of elemental sulfur atoms from cysteine to produce alanine. Functions as a sulfur delivery protein for Fe-S cluster synthesis onto IscU, an Fe-S scaffold assembly protein, as well as other S acceptor proteins. The sequence is that of Cysteine desulfurase IscS from Helicobacter pylori (strain ATCC 700392 / 26695) (Campylobacter pylori).